Reading from the N-terminus, the 451-residue chain is UPF0761 membrane protein Hhal_0704 (451 aa).

Helical transmembrane passes span 66-86 (LLAIVPLMTIGFSVLAAFPVF), 122-142 (ELTAVGIAGLTVTALLLLNTI), 162-182 (FMVYWTVLTMGPLLLGVSVAS), 204-224 (LLNLAPFVVQAIVFSLIYSLV), 228-248 (SVPVLHAVIGGVVASGLFELA), and 268-288 (ALAALPIFLVWLYISWLVILI).

This sequence belongs to the UPF0761 family.

It is found in the cell inner membrane. This chain is UPF0761 membrane protein Hhal_0704, found in Halorhodospira halophila (strain DSM 244 / SL1) (Ectothiorhodospira halophila (strain DSM 244 / SL1)).